Consider the following 518-residue polypeptide: NADH-quinone oxidoreductase subunit N (518 aa).

Helical transmembrane passes span 18–38 (FRPEMALTFGTLVLFVLDLVF), 45–65 (VALLTAGALAVLAAAAGLLAI), 82–102 (AFAIFFKWLFLAAGALTVIIA), 113–133 (IGQFFALLMAIVLGMFMMASA), 136–156 (LLMVYLSLELVSMVSYVLAGF), 171–191 (VIYGGVASGVMLFGMSYLYGL), 220–240 (VALVVAIVFVTAGIGYKVAAV), 254–274 (PTPFTAFLSVGPKAAGFALAI), 295–315 (LAGIPWPAVVGVIAAVTMTLG), 328–348 (LLAYSSIAHAGYTLMGLSAVS), 355–375 (VMIYMLVYLVMNVGAFLVVIL), 399–419 (AVAFAIFLFSLTGLPPFAGFV), 439–459 (WYAWLALIGALNTAIALYYYV), and 486–506 (VMLGAFSVAILVFGIWWTPMV).

The protein belongs to the complex I subunit 2 family. As to quaternary structure, NDH-1 is composed of 14 different subunits. Subunits NuoA, H, J, K, L, M, N constitute the membrane sector of the complex.

Its subcellular location is the cell inner membrane. It carries out the reaction a quinone + NADH + 5 H(+)(in) = a quinol + NAD(+) + 4 H(+)(out). Functionally, NDH-1 shuttles electrons from NADH, via FMN and iron-sulfur (Fe-S) centers, to quinones in the respiratory chain. The immediate electron acceptor for the enzyme in this species is believed to be ubiquinone. Couples the redox reaction to proton translocation (for every two electrons transferred, four hydrogen ions are translocated across the cytoplasmic membrane), and thus conserves the redox energy in a proton gradient. The polypeptide is NADH-quinone oxidoreductase subunit N (Anaeromyxobacter sp. (strain Fw109-5)).